The following is a 452-amino-acid chain: Protein FAM81B (452 aa).

Composition is skewed to polar residues over residues Met1–Ser11 and Ile38–Ala55. The interval Met1–Ser85 is disordered. Coiled coils occupy residues Ile164 to Ala192 and Leu329 to Val452.

This sequence belongs to the FAM81 family.

This Homo sapiens (Human) protein is Protein FAM81B (FAM81B).